A 90-amino-acid polypeptide reads, in one-letter code: Small ribosomal subunit protein bS16 (90 aa).

This sequence belongs to the bacterial ribosomal protein bS16 family.

The polypeptide is Small ribosomal subunit protein bS16 (Geobacillus kaustophilus (strain HTA426)).